Reading from the N-terminus, the 1009-residue chain is MFARIFIPKKHRQRFDEAVSQSLINRMCRSKSLGEPQNRLRRSRSQDHHERPQGSKRASSVPRDTGDEPAQNDRTLRKSNTMIPTQYVSGVNQRTIRVYRGKKSFGFTLRGHAPVWIDSVMPGSPAEACGLKTGDRILFLNGLDMRNCSHEKVVSMLQGSGAMPSLVVEEGPVDYPQSDSEPEETPSAPRSRSPALSSLQWVAEILPPSIRVHGRTFSQQLEHLLTLQERYTICKALETFFQHRNVDTLIVDVFPVLDTPAKQLIWQFIYQLLTYEEQEHCKTKIARFLGFKSAGNRKSGLSLTWTDSFPGPQFETYQQTVASPDSVDSNPYVSLDSPPASPLPSDELSPLPQRRKLFTFSRPPRSRDTDKFLDALSEQLGHRVNIVDDFKGGENDYEEMSFQDEQEVNMLPHELSSASSEDHSSSDDSTSVSYSSGSDHIPPPPQSPPPPPPPLQFTDSPSPLPITPEHLPQPPPAFQHHPIIAPPPPPPRPFLANRPSLHKVLPTREELRAQHSHPRRSSPQPSSQPILQLHQPKAHPILQSSPHTSPQPPHTSAQHTRLQHPSQSIYQSQQTTVPRTSPSLTKQKSLHSQPSQQSFEGTLSSKVPPPPPPPLPPPCDPPPLPKPSPKASDNNHMSVKRLRWEQLGDDPDYHKLSDMVKYLDLDLYFGTQRNSKPTFLPENLKKKDVVEILSHKKAYNASILIAHLKLAPKELRDILMTMSTERLEPAHIKQLLLYAPDDEEVKQFQHYDQDPAKLSEPDQFVLQMLLVPEYKTRLRSLLFKTTVQEKTEEMRAAYECIYKASLELKNSKRLAKILEFVLAMGNYLNNGQPKTNKTTGFKINFLTELNTTKTVDGKSTFLHILAKSLCQHFPELLGFSRDLITVPLAAKVNQRTITADLSDVHSTIQDIRTACVKIPATAEDRFAAVMSSFLENCHPAVQSLDSLQQRAMDEFHKVASYFGEDSKVTTTETFFGIFAEFISKFERALSETQGTENPKSPRIASPLAW.

5 disordered regions span residues 28 to 82, 170 to 193, 322 to 369, 414 to 635, and 990 to 1009; these read CRSK…SNTM, EGPVDYPQSDSEPEETPSAPRSRS, ASPD…SRDT, ELSS…SDNN, and SETQGTENPKSPRIASPLAW. Positions 44–53 are enriched in basic and acidic residues; it reads RSQDHHERPQ. One can recognise a PDZ domain in the interval 95-172; the sequence is TIRVYRGKKS…MPSLVVEEGP (78 aa). A compositionally biased stretch (polar residues) spans 322–332; that stretch reads ASPDSVDSNPY. Low complexity-rich tracts occupy residues 334–352 and 427–439; these read SLDSPPASPLPSDELSPLP and DDSTSVSYSSGSD. 3 stretches are compositionally biased toward pro residues: residues 441–455, 462–477, and 484–493; these read IPPPPQSPPPPPPPL, SPLPITPEHLPQPPPA, and IAPPPPPPRP. Residues 521-535 are compositionally biased toward low complexity; the sequence is SSPQPSSQPILQLHQ. Over residues 557–602 the composition is skewed to polar residues; the sequence is AQHTRLQHPSQSIYQSQQTTVPRTSPSLTKQKSLHSQPSQQSFEGT. A compositionally biased stretch (pro residues) spans 607–628; it reads VPPPPPPPLPPPCDPPPLPKPS. The 381-residue stretch at 629–1009 folds into the FH2 domain; the sequence is PKASDNNHMS…SPRIASPLAW (381 aa).

The protein localises to the postsynaptic cell membrane. Its function is as follows. Postsynaptic scaffolding protein. The chain is Delphilin (grid2ip) from Danio rerio (Zebrafish).